We begin with the raw amino-acid sequence, 1272 residues long: Regulator of nonsense transcripts 2 (1272 aa).

The span at 1–114 shows a compositional bias: basic and acidic residues; it reads MPAERKKPAS…QEEQAKRQQE (114 aa). Disordered regions lie at residues 1–126, 370–389, 423–445, and 490–517; these read MPAE…EKEE, DHRELQNTERQNRRILHSKG, NMPDLPQDKPTPEEHGPGIDIFT, and CQNKESNKDDTKEAKESKENKEVSSPDD. Residues 54 to 134 are a coiled coil; the sequence is EDKKKRLEDD…EESIQLHQEA (81 aa). Residues 94-133 are sufficient for interaction with UPF1; that stretch reads KKKHQEEERKKQEEQAKRQQEEEAAAQMKEKEESIQLHQE. The 264-residue stretch at 168–431 folds into the MIF4G 1 domain; sequence LKKNTAFVKK…ENMPDLPQDK (264 aa). Basic and acidic residues-rich tracts occupy residues 428–439 and 490–513; these read PQDKPTPEEHGP and CQNKESNKDDTKEAKESKENKEVS. Positions 487-559 form a coiled coil; sequence EKSCQNKESN…EQEQEDEEAS (73 aa). MIF4G domains lie at 569-758 and 773-986; these read DAFL…CNPP and EYVR…LRPK. Residues 711–928 are sufficient for interaction with UPF3A and UPF3B; sequence GRFLFRSPES…IRLVCTILDT (218 aa). A sufficient for interaction with EIF4A1 and EIF1 region spans residues 757 to 1272; the sequence is PPPAEKTVKK…LIFKTGGRRR (516 aa). A binds to UPF3B region spans residues 839–859; it reads EDVGIHVVDGVLEDIRLGMEV. The segment at 1018-1098 is disordered; the sequence is DSKDSMTEGE…DEENTEVMIK (81 aa). Residues 1027-1076 are compositionally biased toward acidic residues; the sequence is ENLEEDEEEEEGGAETEEQSGNESEVNEPEEEEGSDNDDDEGEEEEEENT. A sufficient for interaction with UPF1 C-terminus region spans residues 1084–1272; the sequence is KENETDEENT…LIFKTGGRRR (189 aa). At Thr-1088 the chain carries Phosphothreonine. 2 interaction with UPF1 regions span residues 1105 to 1129 and 1167 to 1207; these read VPCVEDEDFIQALDKMMLENLQQRS and DTMP…AEQE. The necessary for interaction with UPF1 stretch occupies residues 1105–1198; it reads VPCVEDEDFI…PMSSQLAANH (94 aa). Residues 1220–1272 are disordered; the sequence is NERQEQEDYQEMLQSLAQRPAPANTNRERRPRYQHPKGAPNADLIFKTGGRRR.

Found in a post-splicing messenger ribonucleoprotein (mRNP) complex. Associates with the exon junction complex (EJC). Interacts with SMG1, EST1A, UPF1, UPF3A, UPF3B, EIF4A1 and EIF1. Ubiquitous.

The protein localises to the cytoplasm. The protein resides in the perinuclear region. In terms of biological role, involved in nonsense-mediated decay (NMD) of mRNAs containing premature stop codons by associating with the nuclear exon junction complex (EJC). Recruited by UPF3B associated with the EJC core at the cytoplasmic side of the nuclear envelope and the subsequent formation of an UPF1-UPF2-UPF3 surveillance complex (including UPF1 bound to release factors at the stalled ribosome) is believed to activate NMD. In cooperation with UPF3B stimulates both ATPase and RNA helicase activities of UPF1. Binds spliced mRNA. This chain is Regulator of nonsense transcripts 2, found in Homo sapiens (Human).